The chain runs to 182 residues: Ribulose bisphosphate carboxylase small subunit, chloroplastic (182 aa).

The N-terminal 58 residues, 1-58, are a transit peptide targeting the chloroplast; that stretch reads MASSMISSATIATVNCSSPAQANMVAPFTGLKSASAFPVTRKANNDITSLASNGGRVQ.

Belongs to the RuBisCO small chain family. As to quaternary structure, heterohexadecamer of 8 large and 8 small subunits.

The protein localises to the plastid. It is found in the chloroplast. Functionally, ruBisCO catalyzes two reactions: the carboxylation of D-ribulose 1,5-bisphosphate, the primary event in carbon dioxide fixation, as well as the oxidative fragmentation of the pentose substrate. Both reactions occur simultaneously and in competition at the same active site. Although the small subunit is not catalytic it is essential for maximal activity. This chain is Ribulose bisphosphate carboxylase small subunit, chloroplastic, found in Gossypium hirsutum (Upland cotton).